The following is a 544-amino-acid chain: Putative ankyrin repeat protein L289 (544 aa).

11 ANK repeats span residues 31–71 (KNFS…AQNE), 72–105 (HGWT…DPNI), 110–143 (YSQT…DINH), 147–181 (LGVS…DINS), 185–218 (QGNT…DPNI), 222–255 (KGTT…NINF), 259–297 (YNET…DIPI), 300–339 (DKLS…IQCS), 340–374 (NGKT…NPNI), 378–413 (QGKT…TIDN), and 414–447 (TGQS…CVNK).

This chain is Putative ankyrin repeat protein L289, found in Acanthamoeba polyphaga mimivirus (APMV).